A 289-amino-acid polypeptide reads, in one-letter code: MAGAKEIRTKIASVKSTQKITKAMEMVAASKMRKTQERMSSSRPYSETIRNVISHVSKATIGYKHPFLVDREVKKVGMIVVSTDRGLCGGLNVNLFKTVLNEMKEWKEKDVSVQLSLIGSKSINFFQSLGIKILTQDSGIGDTPSVEQLIGSVNSMIDAYKKGEVDVVYLVYNKFINTMSQKPVLEKLIPLPELDNDELGERKQVWDYIYEPDAKVLLDNLLVRYLESQVYQAAVENLASEQAARMVAMKAATDNAGNLINELQLVYNKARQASITNELNEIVAGAAAI.

The protein belongs to the ATPase gamma chain family. In terms of assembly, F-type ATPases have 2 components, CF(1) - the catalytic core - and CF(0) - the membrane proton channel. CF(1) has five subunits: alpha(3), beta(3), gamma(1), delta(1), epsilon(1). CF(0) has three main subunits: a, b and c.

The protein localises to the cell inner membrane. In terms of biological role, produces ATP from ADP in the presence of a proton gradient across the membrane. The gamma chain is believed to be important in regulating ATPase activity and the flow of protons through the CF(0) complex. The protein is ATP synthase gamma chain of Pasteurella multocida (strain Pm70).